A 273-amino-acid polypeptide reads, in one-letter code: Bifunctional protein FolD (273 aa).

Residues 155 to 157 (GRS), Ser182, and Ile223 each bind NADP(+).

It belongs to the tetrahydrofolate dehydrogenase/cyclohydrolase family. Homodimer.

The enzyme catalyses (6R)-5,10-methylene-5,6,7,8-tetrahydrofolate + NADP(+) = (6R)-5,10-methenyltetrahydrofolate + NADPH. It carries out the reaction (6R)-5,10-methenyltetrahydrofolate + H2O = (6R)-10-formyltetrahydrofolate + H(+). The protein operates within one-carbon metabolism; tetrahydrofolate interconversion. In terms of biological role, catalyzes the oxidation of 5,10-methylenetetrahydrofolate to 5,10-methenyltetrahydrofolate and then the hydrolysis of 5,10-methenyltetrahydrofolate to 10-formyltetrahydrofolate. The protein is Bifunctional protein FolD of Pseudothermotoga lettingae (strain ATCC BAA-301 / DSM 14385 / NBRC 107922 / TMO) (Thermotoga lettingae).